A 289-amino-acid chain; its full sequence is Glycine-rich RNA-binding protein 5, mitochondrial (289 aa).

The transit peptide at 1-31 directs the protein to the mitochondrion; that stretch reads MAFLSKVGRLFSQTSSHVTASSSMLQSIRCM. In terms of domain architecture, RRM spans 34-111; it reads SKIFVGGISY…RRIRVNYATE (78 aa). The tract at residues 219–289 is disordered; the sequence is QGSSTNAGFD…TDDGDVAKRA (71 aa). The span at 257–272 shows a compositional bias: polar residues; sequence GSDNQFGDAENGNTEN.

This sequence belongs to the GR-RBP family. As to quaternary structure, homodimer. Interacts with MORF8/RIP1 AND RBG3/ORRM3. Binds to RBG2/ORRM5.

The protein localises to the mitochondrion. Possibly has a role in RNA transcription or processing during stress. Binds RNAs and DNAs sequence with a preference to single-stranded nucleic acids. Displays strong affinity to poly(U) sequence. Involved in C-to-U editing of mitochondrial RNA. Functions as a major mitochondrial editing factor. Controls 44 percent of the mitochondrial editing sites. The protein is Glycine-rich RNA-binding protein 5, mitochondrial of Arabidopsis thaliana (Mouse-ear cress).